The sequence spans 287 residues: 2-dehydro-3-deoxyphosphooctonate aldolase (287 aa).

The protein belongs to the KdsA family.

The protein localises to the cytoplasm. It catalyses the reaction D-arabinose 5-phosphate + phosphoenolpyruvate + H2O = 3-deoxy-alpha-D-manno-2-octulosonate-8-phosphate + phosphate. It functions in the pathway carbohydrate biosynthesis; 3-deoxy-D-manno-octulosonate biosynthesis; 3-deoxy-D-manno-octulosonate from D-ribulose 5-phosphate: step 2/3. The protein operates within bacterial outer membrane biogenesis; lipopolysaccharide biosynthesis. The polypeptide is 2-dehydro-3-deoxyphosphooctonate aldolase (Leptospira interrogans serogroup Icterohaemorrhagiae serovar copenhageni (strain Fiocruz L1-130)).